Here is a 349-residue protein sequence, read N- to C-terminus: Hyaluronidase Tab y 2.0101 (349 aa).

Positions 1-25 (MKLHQGLVCLSVLILLPTCILGDRK) are cleaved as a signal peptide. 2 cysteine pairs are disulfide-bonded: cysteine 37-cysteine 328 and cysteine 205-cysteine 216. N-linked (GlcNAc...) asparagine glycans are attached at residues asparagine 41, asparagine 81, asparagine 99, and asparagine 119. Glutamate 129 serves as the catalytic Proton donor. N-linked (GlcNAc...) asparagine glycosylation is present at asparagine 147. 2 N-linked (GlcNAc...) asparagine glycosylation sites follow: asparagine 251 and asparagine 297.

Belongs to the glycosyl hydrolase 56 family. As to expression, expressed in salivary glands.

Its subcellular location is the secreted. The enzyme catalyses Random hydrolysis of (1-&gt;4)-linkages between N-acetyl-beta-D-glucosamine and D-glucuronate residues in hyaluronate.. In terms of biological role, hydrolyzes high molecular weight hyaluronic acid to produce small oligosaccharides. This Tabanus yao (Horsefly) protein is Hyaluronidase Tab y 2.0101.